We begin with the raw amino-acid sequence, 536 residues long: Chorismate synthase (536 aa).

Histidine 17 is an active-site residue. The segment at 37–59 (EDVQPQLNRRRPGQGPLSTQRRE) is disordered. Residue histidine 104 is part of the active site. The interval 344–377 (ERDGCSAATLSRERASDGRTTSRHEEEVERGRER) is disordered. The span at 354 to 377 (SRERASDGRTTSRHEEEVERGRER) shows a compositional bias: basic and acidic residues. Aspartate 489 is a catalytic residue.

It belongs to the chorismate synthase family. The cofactor is FMNH2.

The catalysed reaction is 5-O-(1-carboxyvinyl)-3-phosphoshikimate = chorismate + phosphate. It carries out the reaction FMNH2 + NADP(+) = FMN + NADPH + 2 H(+). It participates in metabolic intermediate biosynthesis; chorismate biosynthesis; chorismate from D-erythrose 4-phosphate and phosphoenolpyruvate: step 7/7. Bifunctional chorismate synthase and flavin reductase. Catalyzes the conversion of 5-enolpyruvylshikimate 3-phosphate (EPSP) to form chorismate. Acts also as a flavin reductase (FR) able to generate reduced flavin mononucleotide in the presence of NADPH. The sequence is that of Chorismate synthase (AROC) from Toxoplasma gondii.